The sequence spans 486 residues: Glycogen synthase (486 aa).

Residue Lys20 participates in ADP-alpha-D-glucose binding.

Belongs to the glycosyltransferase 1 family. Bacterial/plant glycogen synthase subfamily.

The enzyme catalyses [(1-&gt;4)-alpha-D-glucosyl](n) + ADP-alpha-D-glucose = [(1-&gt;4)-alpha-D-glucosyl](n+1) + ADP + H(+). The protein operates within glycan biosynthesis; glycogen biosynthesis. In terms of biological role, synthesizes alpha-1,4-glucan chains using ADP-glucose. This chain is Glycogen synthase, found in Aeromonas hydrophila subsp. hydrophila (strain ATCC 7966 / DSM 30187 / BCRC 13018 / CCUG 14551 / JCM 1027 / KCTC 2358 / NCIMB 9240 / NCTC 8049).